Here is a 1004-residue protein sequence, read N- to C-terminus: ABC transporter G family member 25 (1004 aa).

A signal peptide spans 1–27 (MAASQLLAAAVAAAVFLAALLVPPARC). A helical membrane pass occupies residues 271–291 (ATALFGGILIVILSVVLLLVY). Residues 343-373 (SDQLAASSNEARHATEGNGKRSKNRKKLAHA) are disordered. Residues 352–361 (EARHATEGNG) are compositionally biased toward basic and acidic residues. The segment covering 362–372 (KRSKNRKKLAH) has biased composition (basic residues). One can recognise an ABC transporter domain in the interval 419 to 659 (VVFKGLTLSI…FSSLGIKVPE (241 aa)). 451–458 (GPSGAGKT) serves as a coordination point for ATP. Helical transmembrane passes span 776-796 (ATLQ…IGTI), 804-824 (FGVA…QLAA), 886-906 (LVFL…AIWF), 907-927 (ELGL…LVGT), 943-963 (WALE…WLIT), and 978-998 (FVLC…IALL).

This sequence belongs to the ABC transporter superfamily. ABCG family. Eye pigment precursor importer (TC 3.A.1.204) subfamily.

Its subcellular location is the membrane. This chain is ABC transporter G family member 25, found in Oryza sativa subsp. japonica (Rice).